Here is a 345-residue protein sequence, read N- to C-terminus: Phenylalanine--tRNA ligase alpha subunit (345 aa).

Position 253 (Glu253) interacts with Mg(2+).

This sequence belongs to the class-II aminoacyl-tRNA synthetase family. Phe-tRNA synthetase alpha subunit type 1 subfamily. As to quaternary structure, tetramer of two alpha and two beta subunits. The cofactor is Mg(2+).

The protein localises to the cytoplasm. It catalyses the reaction tRNA(Phe) + L-phenylalanine + ATP = L-phenylalanyl-tRNA(Phe) + AMP + diphosphate + H(+). The polypeptide is Phenylalanine--tRNA ligase alpha subunit (Nitratidesulfovibrio vulgaris (strain DSM 19637 / Miyazaki F) (Desulfovibrio vulgaris)).